Here is a 136-residue protein sequence, read N- to C-terminus: Regulator of nucleoside diphosphate kinase (136 aa).

Belongs to the Rnk family. As to quaternary structure, interacts with the RNA polymerase.

May act as an anti-Gre factor. This chain is Regulator of nucleoside diphosphate kinase, found in Escherichia coli O6:H1 (strain CFT073 / ATCC 700928 / UPEC).